The primary structure comprises 229 residues: uncharacterized protein (229 aa).

This is an uncharacterized protein from Treponema pallidum (strain Nichols).